Reading from the N-terminus, the 275-residue chain is Phosphate import ATP-binding protein PstB (275 aa).

One can recognise an ABC transporter domain in the interval 28-270; that stretch reads IDCRDIRVFY…PREKRTEDYI (243 aa). 60-67 is an ATP binding site; it reads GPSGCGKS.

It belongs to the ABC transporter superfamily. Phosphate importer (TC 3.A.1.7) family. As to quaternary structure, the complex is composed of two ATP-binding proteins (PstB), two transmembrane proteins (PstC and PstA) and a solute-binding protein (PstS).

Its subcellular location is the cell inner membrane. It catalyses the reaction phosphate(out) + ATP + H2O = ADP + 2 phosphate(in) + H(+). In terms of biological role, part of the ABC transporter complex PstSACB involved in phosphate import. Responsible for energy coupling to the transport system. The protein is Phosphate import ATP-binding protein PstB of Hyphomonas neptunium (strain ATCC 15444).